Here is a 166-residue protein sequence, read N- to C-terminus: Large ribosomal subunit protein uL10 (166 aa).

The protein belongs to the universal ribosomal protein uL10 family. Part of the ribosomal stalk of the 50S ribosomal subunit. The N-terminus interacts with L11 and the large rRNA to form the base of the stalk. The C-terminus forms an elongated spine to which L12 dimers bind in a sequential fashion forming a multimeric L10(L12)X complex.

Functionally, forms part of the ribosomal stalk, playing a central role in the interaction of the ribosome with GTP-bound translation factors. The chain is Large ribosomal subunit protein uL10 from Bacillus velezensis (strain DSM 23117 / BGSC 10A6 / LMG 26770 / FZB42) (Bacillus amyloliquefaciens subsp. plantarum).